A 586-amino-acid chain; its full sequence is Eukaryotic translation initiation factor 3 subunit D (586 aa).

Disordered stretches follow at residues 16-37 (EDSW…YAPF) and 104-176 (KRTF…REPS). Gly residues predominate over residues 108–131 (GRGGGTVFRGRAQRGGAGQRGGRA). Positions 162–174 (GWKDYDKPQRTRE) are enriched in basic and acidic residues. The tract at residues 301 to 315 (SIDLVTVNENAADAP) is RNA gate. Positions 563–586 (ANTFEEDDEAADEQEEKATEESEE) are disordered. Positions 566–577 (FEEDDEAADEQE) are enriched in acidic residues.

The protein belongs to the eIF-3 subunit D family. In terms of assembly, component of the eukaryotic translation initiation factor 3 (eIF-3) complex.

The protein resides in the cytoplasm. MRNA cap-binding component of the eukaryotic translation initiation factor 3 (eIF-3) complex, which is involved in protein synthesis of a specialized repertoire of mRNAs and, together with other initiation factors, stimulates binding of mRNA and methionyl-tRNAi to the 40S ribosome. The eIF-3 complex specifically targets and initiates translation of a subset of mRNAs involved in cell proliferation. In the eIF-3 complex, eif3d specifically recognizes and binds the 7-methylguanosine cap of a subset of mRNAs. This chain is Eukaryotic translation initiation factor 3 subunit D, found in Aspergillus clavatus (strain ATCC 1007 / CBS 513.65 / DSM 816 / NCTC 3887 / NRRL 1 / QM 1276 / 107).